A 319-amino-acid chain; its full sequence is tRNA uridine(34) hydroxylase (319 aa).

A Rhodanese domain is found at 127–221 (KQEDTVIIDA…YGKDPEVQGE (95 aa)). Cys181 acts as the Cysteine persulfide intermediate in catalysis.

It belongs to the TrhO family.

The enzyme catalyses uridine(34) in tRNA + AH2 + O2 = 5-hydroxyuridine(34) in tRNA + A + H2O. In terms of biological role, catalyzes oxygen-dependent 5-hydroxyuridine (ho5U) modification at position 34 in tRNAs. The sequence is that of tRNA uridine(34) hydroxylase from Bacillus cereus (strain ATCC 10987 / NRS 248).